Consider the following 431-residue polypeptide: MEVGFKALLDDLDVLEKSLSDPALINKLRSHVENLATLSKCNPHRRSKVKELSSEVVDSNPYSRLMALQRMGIVDNYERIREFSVAIVGIGGVGSVAAEMLTRCGIGRLLLYDYDTVELANMNRLFFRPDQVGMTKTDAAVQTLAEINPDVVLESFTMNITTVQGFETFTSSLTNKSFCPSKEGGSGVDLVLSCVDNYEARMAVNQACNELRQTWMESGVSEDAVSGHIQLLVPGETACFACAPPLVVASGIDERTLKREGVCAASLPTTMGVVAGLLVQNSLKFLLNFGEVSPYLGYNSLKDFFPTMKMRPNPQCSNVACLERQKEYMLAKPERDAAAKAKMEADASTTIDEGPLHDDNEWNISVVDDENEKDTTKAASSSDTLPEGLTRELPVADEYEKAIAIASGSGETEEEDDLEDLKKQLEALNAA.

G92, D113, K136, N159, and N197 together coordinate ATP. 2 residues coordinate Zn(2+): C239 and C242. Catalysis depends on C263, which acts as the Glycyl thioester intermediate. Positions 316 and 321 each coordinate Zn(2+). Residues 339 to 396 (AKAKMEADASTTIDEGPLHDDNEWNISVVDDENEKDTTKAASSSDTLPEGLTRELPVA) form a disordered region.

Belongs to the ubiquitin-activating E1 family. UBA5 subfamily.

Functionally, E1-like enzyme which activates UFM1. In Arabidopsis thaliana (Mouse-ear cress), this protein is Ubiquitin-like modifier-activating enzyme 5.